The sequence spans 254 residues: Ribonuclease PH (254 aa).

Phosphate is bound by residues Arg90 and 128 to 130 (GTR).

It belongs to the RNase PH family. Homohexameric ring arranged as a trimer of dimers.

The catalysed reaction is tRNA(n+1) + phosphate = tRNA(n) + a ribonucleoside 5'-diphosphate. Phosphorolytic 3'-5' exoribonuclease that plays an important role in tRNA 3'-end maturation. Removes nucleotide residues following the 3'-CCA terminus of tRNAs; can also add nucleotides to the ends of RNA molecules by using nucleoside diphosphates as substrates, but this may not be physiologically important. Probably plays a role in initiation of 16S rRNA degradation (leading to ribosome degradation) during starvation. In Corynebacterium kroppenstedtii (strain DSM 44385 / JCM 11950 / CIP 105744 / CCUG 35717), this protein is Ribonuclease PH.